The primary structure comprises 254 residues: Diphthine synthase (254 aa).

Residues Leu11, Asp86, Ile89, 114–115, Leu166, Leu207, and His232 each bind S-adenosyl-L-methionine; that span reads SV.

Belongs to the diphthine synthase family. As to quaternary structure, homodimer.

It carries out the reaction 2-[(3S)-amino-3-carboxypropyl]-L-histidyl-[translation elongation factor 2] + 3 S-adenosyl-L-methionine = diphthine-[translation elongation factor 2] + 3 S-adenosyl-L-homocysteine + 3 H(+). Its pathway is protein modification; peptidyl-diphthamide biosynthesis. In terms of biological role, S-adenosyl-L-methionine-dependent methyltransferase that catalyzes the trimethylation of the amino group of the modified target histidine residue in translation elongation factor 2 (EF-2), to form an intermediate called diphthine. The three successive methylation reactions represent the second step of diphthamide biosynthesis. In Sulfurisphaera tokodaii (strain DSM 16993 / JCM 10545 / NBRC 100140 / 7) (Sulfolobus tokodaii), this protein is Diphthine synthase.